The primary structure comprises 583 residues: MESSSVASASSEAGSSRSLEIEELERFIDSYVLEYQVQGLLTDKTEGDGESDKTQSNVSQWTVECTERLEENRTSPRNREPTYSQNGNKEGPLDMLGTDIWAASTVESISGATWDLQPEKLDFTQLQLRQRNSPKHPPPQIDRDGFGKGKRVEGDDINLNDIEKVLPTWQGYSPLPHEADIAQTKKLFRRKRNDRRKQQKPQGGNKQPPSQQNDHQPATAKHNSREHQRQYHGNPPPPHPSGKQGHHGYSQNRRWHHNQKHLPNDLQRNAKETDTLKIEDASVCTVHIPLDIHSNTDSTERHCPPANDSEAKRKESIQSRDRPKISLLQSSKDRLRRRLKEKEDVAVESTNPQKTKMDKLIEILNSMRNNSSDVDYKLTTFMAEAQNSANSEEMLGEIVKTIYQKAVTDRSFAHTAAKLCDRMALFMVEGTKFRSLLLNMLQKDFSIREEMHRSDVERWLGFITFLCEVFGTMRSNMAEPFRVLVCPIYTCLRELLQSEDVKEDAVLCCSMELQSAGRLLEDQLPEMMSELLATARDKMLCPSESMLTRSLLLEVIELHANSWNPLTPTITQYYNKTIQKLTG.

4 disordered regions span residues 42 to 95 (TDKT…PLDM), 129 to 154 (RQRN…RVEG), 190 to 251 (RKRN…GYSQ), and 294 to 325 (SNTD…RPKI). Residues 43-53 (DKTEGDGESDK) are compositionally biased toward basic and acidic residues. A compositionally biased stretch (polar residues) spans 54–63 (TQSNVSQWTV). Composition is skewed to basic and acidic residues over residues 65-80 (CTER…RNRE) and 141-154 (IDRD…RVEG). Basic residues predominate over residues 190 to 199 (RKRNDRRKQQ). A compositionally biased stretch (low complexity) spans 200–213 (KPQGGNKQPPSQQN). A compositionally biased stretch (basic and acidic residues) spans 298 to 324 (STERHCPPANDSEAKRKESIQSRDRPK). The 202-residue stretch at 361 to 562 (IEILNSMRNN…LEVIELHANS (202 aa)) folds into the MIF4G domain.

Belongs to the CTIF family.

The protein localises to the cytoplasm. Its subcellular location is the perinuclear region. Specifically required for the pioneer round of mRNA translation mediated by the cap-binding complex (CBC), that takes place during or right after mRNA export via the nuclear pore complex (NPC). In contrast, it is not involved in steady state translation, that takes place when the CBC complex is replaced by cytoplasmic cap-binding protein eIF4E. Also required for nonsense-mediated mRNA decay (NMD), the pioneer round of mRNA translation mediated by the cap-binding complex playing a central role in nonsense-mediated mRNA decay (NMD). This chain is CBP80/20-dependent translation initiation factor (ctif), found in Xenopus tropicalis (Western clawed frog).